The following is a 451-amino-acid chain: uncharacterized protein (451 aa).

A signal peptide spans 1–22; it reads MKLKLIFSLFLVLVFCSLFVFG. Residues asparagine 25, asparagine 45, asparagine 209, asparagine 326, and asparagine 402 are each glycosylated (N-linked (GlcNAc...) asparagine).

It localises to the secreted. This is an uncharacterized protein from Dictyostelium discoideum (Social amoeba).